An 86-amino-acid chain; its full sequence is MANIKSAKKRAVQSEKRRKHNASGRSMMRTYIKKVEAAIATGDKEAAQAAYAVMKPIVDRKAAKGLIHKNKAARHKSNLSARINAL.

Positions 1–22 are enriched in basic residues; sequence MANIKSAKKRAVQSEKRRKHNA. Residues 1-28 are disordered; that stretch reads MANIKSAKKRAVQSEKRRKHNASGRSMM.

This sequence belongs to the bacterial ribosomal protein bS20 family.

Its function is as follows. Binds directly to 16S ribosomal RNA. The protein is Small ribosomal subunit protein bS20 of Serratia proteamaculans (strain 568).